The following is a 117-amino-acid chain: Hainantoxin-XV.2 (117 aa).

Positions M1 to S20 are cleaved as a signal peptide. A disordered region spans residues A18–E55. Residues S21–R56 constitute a propeptide that is removed on maturation. Residues N23–E55 are compositionally biased toward basic and acidic residues. Intrachain disulfides connect C58–C72, C65–C78, C69–C115, and C71–C91.

Belongs to the neurotoxin 03 (Tx2) family. 02 subfamily. HNTX-XV sub-subfamily. In terms of tissue distribution, expressed by the venom gland.

It localises to the secreted. In terms of biological role, putative ion channel inhibitor. In Cyriopagopus hainanus (Chinese bird spider), this protein is Hainantoxin-XV.2.